The following is a 394-amino-acid chain: Endothelial cell-selective adhesion molecule (394 aa).

A signal peptide spans 1–29 (MILQAGTPETSLLRVLFLGLSTLAAFSRA). The Extracellular portion of the chain corresponds to 30–251 (QMELHVPPGL…LDVMTGSKAA (222 aa)). The region spanning 37 to 146 (PGLNKLEAVE…EGKSIGHSIK (110 aa)) is the Ig-like V-type domain. N-linked (GlcNAc...) asparagine glycans are attached at residues asparagine 111, asparagine 172, asparagine 216, and asparagine 239. One can recognise an Ig-like C2-type domain in the interval 159-243 (PSCSLQGVPY…GFAKCNVTLD (85 aa)). Cysteine 177 and cysteine 227 are oxidised to a cystine. The chain crosses the membrane as a helical span at residues 252 to 272 (VVAGAVVGTFVGLVLIAGLVL). Residues 273 to 394 (LYQRRSKTLE…PAQSQAGSLV (122 aa)) lie on the Cytoplasmic side of the membrane. Serine 304 is modified (phosphoserine). 2 stretches are compositionally biased toward polar residues: residues 304-318 (SDTI…SVTS) and 335-347 (FTPT…QALS). The segment at 304–372 (SDTISKNGTL…SLTPGGVSSS (69 aa)) is disordered. A phosphothreonine mark is found at threonine 336 and threonine 338. A phosphoserine mark is found at serine 340, serine 343, serine 348, and serine 375.

Interacts with MAGI1. In terms of tissue distribution, highly expressed in the heart and lung. Weakly expressed in the kidney and skin. Expression is restricted to the vascular endothelial cells. Expressed in the kidney, heart and tongue (at protein level). Also expressed on megakaryocytes and activated platelets.

Its subcellular location is the cell junction. The protein resides in the adherens junction. It is found in the tight junction. It localises to the cell membrane. Can mediate aggregation most likely through a homophilic molecular interaction. This Mus musculus (Mouse) protein is Endothelial cell-selective adhesion molecule (Esam).